An 85-amino-acid polypeptide reads, in one-letter code: MFCVIYRSAKRDQTYLYVEKKDDFSRVPEELMKSFGTPQLAMVLPLDERKKLANADIEKVKLALQEQGFYLQVPPPVENLLNTPV.

The YcgL domain occupies 1–85 (MFCVIYRSAK…PVENLLNTPV (85 aa)).

In Pectobacterium carotovorum subsp. carotovorum (strain PC1), this protein is YcgL domain-containing protein PC1_1941.